A 7570-amino-acid chain; its full sequence is Dystonin (7570 aa).

2 Calponin-homology (CH) domains span residues K35–Q138 and M151–P255. The tract at residues K35–D252 is actin-binding. A phosphoserine mark is found at L135, K184, S236, and S237. 2 Spectrin repeats span residues E602–D699 and L701–K802. One can recognise an SH3 domain in the interval K887 to P944. Spectrin repeat units follow at residues K1293–G1422 and K1440–Q1540. S1382 bears the Phosphoserine mark. The Nuclear localization signal; in isoform 6 motif lies at P1383–M1389. E1565 carries the phosphoserine modification. Plectin repeat units lie at residues I1584 to E1626, K1660 to Q1703, R1774 to Q1817, V1818 to Q1855, and R1856 to N1891. Phosphoserine is present on S2229. Disordered regions lie at residues S2317–Y2346, L2383–A2441, and D2585–R2616. Over residues D2336–E2345 the composition is skewed to acidic residues. The segment covering N2385 to D2394 has biased composition (low complexity). Composition is skewed to acidic residues over residues T2395 to H2412, Y2430 to E2439, and N2591 to G2605. Residue S2919 is modified to Phosphoserine. A disordered region spans residues E3190–D3221. Over residues S3192 to M3209 the composition is skewed to low complexity. 28 Spectrin repeats span residues L3395–M3501, Q3643–D3752, E3926–K4040, Q4047–Q4153, L4160–A4259, E4269–T4368, Q4516–E4621, T4628–D4732, Q4742–Q4842, H4849–K4951, L4958–E5058, Q5068–E5167, G5174–E5277, E5284–Q5388, G5395–E5497, Q5504–E5715, Q5831–E5933, Q5941–D6041, T6048–L6154, E6161–E6263, V6270–E6373, G6380–D6482, K6489–E6591, M6598–D6700, K6707–E6810, G6817–E6918, E6925–A7027, and Q7037–N7167. At S3968 the chain carries Phosphoserine. Residue S4749 is modified to Phosphoserine. K5470 participates in a covalent cross-link: Glycyl lysine isopeptide (Lys-Gly) (interchain with G-Cter in ubiquitin). EF-hand domains are found at residues H7197–P7232 and T7233–A7268. Ca(2+)-binding residues include D7210, D7212, D7214, K7216, E7221, D7246, D7248, D7250, Y7252, and E7257. A GAR domain is found at T7273 to R7351. 3 disordered regions span residues K7358–R7379, S7395–R7452, and Q7481–R7570. Positions S7362–T7374 are enriched in polar residues. Composition is skewed to low complexity over residues S7411–P7441 and S7490–A7504. At S7432 the chain carries Phosphoserine. Residues S7510, S7513, and S7525 each carry the phosphoserine modification. The span at E7519–R7535 shows a compositional bias: polar residues. The Microtubule tip localization signal motif lies at S7550 to P7553.

Homodimer. Isoform 1 interacts (via N-terminus) with PLEC (via N-terminus). Interacts with the neuronal intermediate filament protein, PRPH. Interacts with DES. Interacts with SYNE3. Isoform 1 and isoform 6 can homodimerize (via N-terminus). Isoform 1 interacts (via N-terminus) with ACTN2. Isoform 1 interacts (via N-terminus) with PLEC (via N-terminus). Isoform 3 interacts (via N-terminus) with COL17A1 (via cytoplasmic region). Isoform 3 interacts (via N-terminus) with ITGB4 isoform beta-4a (via cytoplasmic region). Isoform 3 interacts (via N-terminus) with ERBIN (via C-terminus). Isoform 3 associates (via C-terminal) with KRT5-KRT14 (via rod region) intermediate filaments of keratins. Interacts with MAPRE1; probably required for targeting to the growing microtubule plus ends. Interacts with TMIGD2. Isoform 9 interacts with TMEM108. As to expression, isoform 1 is expressed in myoblasts (at protein level). Isoform 3 is expressed in the skin. Isoform 6 is expressed in the brain. Highly expressed in skeletal muscle and cultured keratinocytes.

The protein localises to the cytoplasm. The protein resides in the cytoskeleton. It localises to the stress fiber. Its subcellular location is the cell projection. It is found in the axon. The protein localises to the myofibril. The protein resides in the sarcomere. It localises to the z line. Its subcellular location is the h zone. It is found in the cell junction. The protein localises to the hemidesmosome. The protein resides in the nucleus. It localises to the nucleus envelope. Its subcellular location is the membrane. It is found in the endoplasmic reticulum membrane. The protein localises to the cell cortex. The protein resides in the cell membrane. In terms of biological role, cytoskeletal linker protein. Acts as an integrator of intermediate filaments, actin and microtubule cytoskeleton networks. Required for anchoring either intermediate filaments to the actin cytoskeleton in neural and muscle cells or keratin-containing intermediate filaments to hemidesmosomes in epithelial cells. The proteins may self-aggregate to form filaments or a two-dimensional mesh. Regulates the organization and stability of the microtubule network of sensory neurons to allow axonal transport. Mediates docking of the dynein/dynactin motor complex to vesicle cargos for retrograde axonal transport through its interaction with TMEM108 and DCTN1. Plays a structural role in the assembly of hemidesmosomes of epithelial cells; anchors keratin-containing intermediate filaments to the inner plaque of hemidesmosomes. Required for the regulation of keratinocyte polarity and motility; mediates integrin ITGB4 regulation of RAC1 activity. Functionally, required for bundling actin filaments around the nucleus. Its function is as follows. Regulates the organization and stability of the microtubule network of sensory neurons to allow axonal transport. The sequence is that of Dystonin from Homo sapiens (Human).